The following is a 353-amino-acid chain: Cellulose-complementing protein (353 aa).

Disordered stretches follow at residues 1–21, 75–94, and 117–337; these read MSASGSDEVAGGGQAGSPQDF, PQIAVAPPPPPVVPDPPAIV, and AVPA…SPRP. Residues 80-91 are compositionally biased toward pro residues; it reads APPPPPVVPDPP. Low complexity-rich tracts occupy residues 117-132 and 142-164; these read AVPAEPPVQEAPVQAA and IAEQAPPAAPDPASVPYANVAAA. Residues 165–175 are compositionally biased toward pro residues; the sequence is PVPPDPAPVTP. Polar residues-rich tracts occupy residues 196–226 and 278–304; these read QVRTVQEGATPSRVPSRSMNAFPRTSASSIS and STRSVRSNVSRMTSMTKTDTNSSQASR.

The protein is Cellulose-complementing protein (ccpAX) of Komagataeibacter xylinus (Gluconacetobacter xylinus).